Here is a 206-residue protein sequence, read N- to C-terminus: MRLIRMLLPVLALTTLTAHADDKDVARLTQLLETSKTLTANFSQLTLDGSGTQLQETTGDMTLQRPGLFYWHTNAPAEQTMVSDGKKVTLWDPDLEQATIKKLDERLTQTPALLLSGDVSKISQSFDITAKEAGGVIDFTLKPKTKDTLFDSLRLSFRNGLVNDMQLIDSVGQRTNILFTGVKANEAVPASKFKFDIPKGADVIQE.

The N-terminal stretch at 1–20 (MRLIRMLLPVLALTTLTAHA) is a signal peptide.

The protein belongs to the LolA family. Monomer.

The protein localises to the periplasm. In terms of biological role, participates in the translocation of lipoproteins from the inner membrane to the outer membrane. Only forms a complex with a lipoprotein if the residue after the N-terminal Cys is not an aspartate (The Asp acts as a targeting signal to indicate that the lipoprotein should stay in the inner membrane). This is Outer-membrane lipoprotein carrier protein from Pseudomonas fluorescens (strain Pf0-1).